A 481-amino-acid chain; its full sequence is uncharacterized protein (481 aa).

The next 10 helical transmembrane spans lie at 32–52 (LSWL…YWGV), 82–102 (FFHW…IMAY), 137–157 (MFLI…AATF), 173–193 (VQAF…WIGI), 204–224 (VGWG…TEFI), 258–278 (WTVF…MFVT), 289–309 (VIWG…GVME), 348–368 (LFLA…MDAV), 392–412 (LFWC…GASL), and 418–438 (TVVL…GGFI).

Belongs to the BCCT transporter (TC 2.A.15) family.

It localises to the cell inner membrane. Its function is as follows. Probable transporter whose substrate is unknown. Is not involved in aerobic D-malate transport. This is an uncharacterized protein from Escherichia coli (strain K12).